The sequence spans 270 residues: Formamidopyrimidine-DNA glycosylase (270 aa).

Residue P2 is the Schiff-base intermediate with DNA of the active site. E3 serves as the catalytic Proton donor. Residue K57 is the Proton donor; for beta-elimination activity of the active site. H90, R109, and K150 together coordinate DNA. The segment at 235-269 (LVYGNKDKPCPRCGTKIKSIIIGQRNSFFCPQCQK) adopts an FPG-type zinc-finger fold. R259 (proton donor; for delta-elimination activity) is an active-site residue.

The protein belongs to the FPG family. Monomer. The cofactor is Zn(2+).

The catalysed reaction is Hydrolysis of DNA containing ring-opened 7-methylguanine residues, releasing 2,6-diamino-4-hydroxy-5-(N-methyl)formamidopyrimidine.. It catalyses the reaction 2'-deoxyribonucleotide-(2'-deoxyribose 5'-phosphate)-2'-deoxyribonucleotide-DNA = a 3'-end 2'-deoxyribonucleotide-(2,3-dehydro-2,3-deoxyribose 5'-phosphate)-DNA + a 5'-end 5'-phospho-2'-deoxyribonucleoside-DNA + H(+). In terms of biological role, involved in base excision repair of DNA damaged by oxidation or by mutagenic agents. Acts as a DNA glycosylase that recognizes and removes damaged bases. Has a preference for oxidized purines, such as 7,8-dihydro-8-oxoguanine (8-oxoG). Has AP (apurinic/apyrimidinic) lyase activity and introduces nicks in the DNA strand. Cleaves the DNA backbone by beta-delta elimination to generate a single-strand break at the site of the removed base with both 3'- and 5'-phosphates. This is Formamidopyrimidine-DNA glycosylase from Histophilus somni (strain 2336) (Haemophilus somnus).